We begin with the raw amino-acid sequence, 101 residues long: Enhancer of yellow 2 transcription factor (101 aa).

The protein belongs to the ENY2 family. Component of the nuclear pore complex (NPC)-associated AMEX complex (anchoring and mRNA export complex), composed of at least e(y)2 and xmas-2. Component of the SAGA transcription coactivator-HAT complexes, at least composed of Ada2b, e(y)2, Pcaf/Gcn5, Taf10 and Nipped-A/Trrap. Within the SAGA complex, e(y)2, Sgf11, and not/nonstop form an additional subcomplex of SAGA called the DUB module (deubiquitination module). Component of the THO complex, composed of at least e(y)2, HPR1, THO2, THOC5, THOC6 and THOC7. Interacts with e(y)1. Interacts with su(Hw) (via zinc fingers). Interacts with xmas-2; required for localization to the nuclear periphery. Interacts with the nuclear pore complex (NPC).

The protein resides in the nucleus. Its subcellular location is the nucleoplasm. The protein localises to the cytoplasm. Involved in mRNA export coupled transcription activation by association with both the AMEX and the SAGA complexes. The SAGA complex is a multiprotein complex that activates transcription by remodeling chromatin and mediating histone acetylation and deubiquitination. Within the SAGA complex, participates in a subcomplex that specifically deubiquitinates histone H2B. The SAGA complex is recruited to specific gene promoters by activators, where it is required for transcription. Required for nuclear receptor-mediated transactivation. Involved in transcription elongation by recruiting the THO complex onto nascent mRNA. The AMEX complex functions in docking export-competent ribonucleoprotein particles (mRNPs) to the nuclear entrance of the nuclear pore complex (nuclear basket). AMEX participates in mRNA export and accurate chromatin positioning in the nucleus by tethering genes to the nuclear periphery. The protein is Enhancer of yellow 2 transcription factor of Drosophila simulans (Fruit fly).